The following is a 400-amino-acid chain: Large envelope protein (400 aa).

An N-acetylmethionine modification is found at Met1. Residue Gly2 is the site of N-myristoyl glycine; by host attachment. Positions 2–119 (GAPLSTTRRG…PPLRDTHPQA (118 aa)) are pre-S1. The tract at residues 2 to 174 (GAPLSTTRRG…FLKTGGPATN (173 aa)) is pre-S. At 2–181 (GAPLSTTRRG…ATNMDNITSG (180 aa)) the chain is on the virion surface; in external conformation side. Over 2–253 (GAPLSTTRRG…PGYRWMCLRR (252 aa)) the chain is Intravirion; in internal conformation. An N-linked (GlcNAc...) asparagine glycan is attached at Pro4. Residues 84-114 (VLTTLPADPPPASTNRRSGRKPTPVSPPLRD) form a disordered region. Residues 120 to 174 (MQWNSTQFHQALLDPRVRALYFPAGGSSSETQNPAPTIASLTSSIFLKTGGPATN) form a pre-S2 region. The chain crosses the membrane as a helical span at residues 182-202 (LLGPLLVLQAVCFLLTKILTI). The Intravirion; in external conformation portion of the chain corresponds to 203 to 253 (PQSLDSWWTSLNFLGGTPGCPGQNSQSPTSNHLPTSCPPTCPGYRWMCLRR). A helical membrane pass occupies residues 254 to 274 (FIIFLFILLLCLIFLLVLVDY). The Virion surface segment spans residues 275 to 348 (QGMLPVCPPL…WASARFSWLS (74 aa)). An N-linked (GlcNAc...) asparagine; by host glycan is attached at Asn320. A helical transmembrane segment spans residues 349–369 (LLVQFVQWCVGLSPTVWLLVI). Topologically, residues 370-375 (WMIWYW) are intravirion. Residues 376 to 398 (GPNLCSILSPFIPLLPIFCYLWV) form a helical membrane-spanning segment. Topologically, residues 399–400 (SI) are virion surface.

It belongs to the orthohepadnavirus major surface antigen family. In its internal form (Li-HBsAg), interacts with the capsid protein and with the isoform S. Interacts with host chaperone CANX. As to quaternary structure, associates with host chaperone CANX through its pre-S2 N glycan; this association may be essential for isoform M proper secretion. In terms of assembly, interacts with isoform L. Interacts with the antigens of satellite virus HDV (HDVAgs); this interaction is required for encapsidation of HDV genomic RNA. Isoform M is N-terminally acetylated by host at a ratio of 90%, and N-glycosylated by host at the pre-S2 region. Post-translationally, myristoylated.

Its subcellular location is the virion membrane. In terms of biological role, the large envelope protein exists in two topological conformations, one which is termed 'external' or Le-HBsAg and the other 'internal' or Li-HBsAg. In its external conformation the protein attaches the virus to cell receptors and thereby initiating infection. This interaction determines the species specificity and liver tropism. This attachment induces virion internalization predominantly through caveolin-mediated endocytosis. The large envelope protein also assures fusion between virion membrane and endosomal membrane. In its internal conformation the protein plays a role in virion morphogenesis and mediates the contact with the nucleocapsid like a matrix protein. The middle envelope protein plays an important role in the budding of the virion. It is involved in the induction of budding in a nucleocapsid independent way. In this process the majority of envelope proteins bud to form subviral lipoprotein particles of 22 nm of diameter that do not contain a nucleocapsid. The protein is Large envelope protein of Homo sapiens (Human).